The following is a 476-amino-acid chain: Cysteine--tRNA ligase (476 aa).

Residue Cys-29 participates in Zn(2+) binding. Residues 31 to 41 (PTVYDYTHLGH) carry the 'HIGH' region motif. 3 residues coordinate Zn(2+): Cys-209, His-234, and Glu-238. Residues 266 to 270 (KMSKS) carry the 'KMSKS' region motif. Lys-269 lines the ATP pocket.

This sequence belongs to the class-I aminoacyl-tRNA synthetase family. The cofactor is Zn(2+).

It is found in the cytoplasm. The catalysed reaction is tRNA(Cys) + L-cysteine + ATP = L-cysteinyl-tRNA(Cys) + AMP + diphosphate. The chain is Cysteine--tRNA ligase from Thermococcus onnurineus (strain NA1).